We begin with the raw amino-acid sequence, 286 residues long: Diaminopimelate epimerase (286 aa).

Substrate-binding residues include Asn13 and Asn66. The Proton donor role is filled by Cys75. Substrate contacts are provided by residues 76–77, Asn165, Asn198, and 216–217; these read GN and ER. Cys225 serves as the catalytic Proton acceptor. Residue 226-227 participates in substrate binding; that stretch reads GT.

The protein belongs to the diaminopimelate epimerase family. As to quaternary structure, homodimer.

It is found in the cytoplasm. The enzyme catalyses (2S,6S)-2,6-diaminopimelate = meso-2,6-diaminopimelate. It participates in amino-acid biosynthesis; L-lysine biosynthesis via DAP pathway; DL-2,6-diaminopimelate from LL-2,6-diaminopimelate: step 1/1. Catalyzes the stereoinversion of LL-2,6-diaminopimelate (L,L-DAP) to meso-diaminopimelate (meso-DAP), a precursor of L-lysine and an essential component of the bacterial peptidoglycan. This Oceanobacillus iheyensis (strain DSM 14371 / CIP 107618 / JCM 11309 / KCTC 3954 / HTE831) protein is Diaminopimelate epimerase.